The chain runs to 114 residues: NADH-ubiquinone oxidoreductase chain 3 (114 aa).

3 consecutive transmembrane segments (helical) span residues 4–24 (LVYIVFTIVLTVGLILVSYLL), 55–75 (FYLIAILFIIFDLEVVFILPF), and 82–102 (VSLLGGWITIIFLVILTIGFI).

It belongs to the complex I subunit 3 family.

The protein resides in the mitochondrion membrane. It catalyses the reaction a ubiquinone + NADH + 5 H(+)(in) = a ubiquinol + NAD(+) + 4 H(+)(out). In terms of biological role, core subunit of the mitochondrial membrane respiratory chain NADH dehydrogenase (Complex I) that is believed to belong to the minimal assembly required for catalysis. Complex I functions in the transfer of electrons from NADH to the respiratory chain. The immediate electron acceptor for the enzyme is believed to be ubiquinone. This Allomyces macrogynus protein is NADH-ubiquinone oxidoreductase chain 3 (ND3).